Consider the following 66-residue polypeptide: Large ribosomal subunit protein bL35 (66 aa).

A disordered region spans residues 20-41 (GKVMSAQRGKRHGMIKRTKKQI). A compositionally biased stretch (basic residues) spans 27-41 (RGKRHGMIKRTKKQI).

Belongs to the bacterial ribosomal protein bL35 family.

The sequence is that of Large ribosomal subunit protein bL35 from Rhodopseudomonas palustris (strain BisB5).